The chain runs to 962 residues: Atromentin synthetase nps3 (962 aa).

The segment at 55–469 is adenylation (A) domain; sequence FISSSAHDSS…SGRIKDTVIV (415 aa). The region spanning 601–679 is the Carrier domain; that stretch reads VPATITETAF…DLAKYIDALV (79 aa). Residues 606 to 676 form a thiolation and peptide carrier (T) domain region; that stretch reads TETAFAKIFA…VLRDLAKYID (71 aa). Position 638 is an O-(pantetheine 4'-phosphoryl)serine (Ser-638). Residues 702-805 form a thioesterase (TE) domain region; that stretch reads PIFFVHPGVG…VGLINIPPHI (104 aa).

Belongs to the ATP-dependent AMP-binding enzyme family.

The protein operates within secondary metabolite biosynthesis. Functionally, an L-tyrosine:2-oxoglutarate aminotransferase (probably amt1) and atromentin synthetase nps3 catalyze consecutive steps to turn over L-tyrosine into atromentin, which represents the generic precursor molecule for the entire terphenylquinone and pulvinic acid family of pigments, which are widely distributed secondary metabolites in homobasidiomycetes. The first step catalyzed by the aminotransferase converts L-tyrosine in to 4-hydroxyphenylpyruvate (4-HPP). Adenylation of two 4-HPP monomers by the nps3 adenylation (A) domain, covalent tethering of the monomers as a thioester and oxoester onto the nps3 thiolation (T) and thioesterase (TE) domains, respectively, and symmetric C-C-bond formation between two monomers catalyzed by the nps3 TE domain leads to atromentin. Follow-up products of atromentin in S.lacrymans include atromentic acid, xerocomic acid, isoxerocomic acid and variegatic acid. The sequence is that of Atromentin synthetase nps3 (nps3) from Serpula lacrymans var. lacrymans (strain S7.9) (Dry rot fungus).